Reading from the N-terminus, the 268-residue chain is Adenosylcobinamide-GDP ribazoletransferase (268 aa).

Transmembrane regions (helical) follow at residues 54-74, 80-100, 124-144, 150-170, 202-222, and 243-263; these read IAGL…GVLW, AVVL…DGLS, IGVM…AFLA, WLTA…YGIV, ALAL…VWMV, and GALC…SAPM.

It belongs to the CobS family. It depends on Mg(2+) as a cofactor.

The protein localises to the cell membrane. It catalyses the reaction alpha-ribazole + adenosylcob(III)inamide-GDP = adenosylcob(III)alamin + GMP + H(+). The enzyme catalyses alpha-ribazole 5'-phosphate + adenosylcob(III)inamide-GDP = adenosylcob(III)alamin 5'-phosphate + GMP + H(+). It functions in the pathway cofactor biosynthesis; adenosylcobalamin biosynthesis; adenosylcobalamin from cob(II)yrinate a,c-diamide: step 7/7. Functionally, joins adenosylcobinamide-GDP and alpha-ribazole to generate adenosylcobalamin (Ado-cobalamin). Also synthesizes adenosylcobalamin 5'-phosphate from adenosylcobinamide-GDP and alpha-ribazole 5'-phosphate. The sequence is that of Adenosylcobinamide-GDP ribazoletransferase from Roseiflexus sp. (strain RS-1).